The following is a 155-amino-acid chain: Protein SprT-like (155 aa).

One can recognise a SprT-like domain in the interval 7 to 145; that stretch reads QRHMEEVSLQ…GSCGGKLIQT (139 aa). Residue His-67 participates in Zn(2+) binding. Glu-68 is an active-site residue. His-71 provides a ligand contact to Zn(2+).

The protein belongs to the SprT family. Requires Zn(2+) as cofactor.

Its subcellular location is the cytoplasm. This Listeria monocytogenes serovar 1/2a (strain ATCC BAA-679 / EGD-e) protein is Protein SprT-like.